The primary structure comprises 382 residues: Mannitol-1-phosphate 5-dehydrogenase (382 aa).

NAD(+) is bound at residue 3–14 (ALHFGAGNIGRG).

It belongs to the mannitol dehydrogenase family.

It catalyses the reaction D-mannitol 1-phosphate + NAD(+) = beta-D-fructose 6-phosphate + NADH + H(+). The chain is Mannitol-1-phosphate 5-dehydrogenase from Salmonella paratyphi A (strain ATCC 9150 / SARB42).